Consider the following 360-residue polypeptide: Arginase, non-hepatic 3 (360 aa).

Mn(2+) is bound by residues His122, Asp145, His147, and Asp149. Residues 147–151, 158–160, and Asp204 contribute to the substrate site; these read HADIN and SGN. 2 residues coordinate Mn(2+): Asp253 and Asp255. Residues Thr267 and Glu298 each coordinate substrate.

Belongs to the arginase family. In terms of assembly, homotrimer. It depends on Mn(2+) as a cofactor. Expressed at differing tadpole stages in tail, intestine, hindlimb and trunk region. Strongest in tadpole tail.

It catalyses the reaction L-arginine + H2O = urea + L-ornithine. It functions in the pathway nitrogen metabolism; urea cycle; L-ornithine and urea from L-arginine: step 1/1. Functionally, as well as its role in the urea cycle, may be involved in tissue remodeling. In Xenopus laevis (African clawed frog), this protein is Arginase, non-hepatic 3 (arg2-c).